Reading from the N-terminus, the 433-residue chain is Probable M18 family aminopeptidase 2 (433 aa).

Zn(2+) contacts are provided by histidine 79, histidine 153, and histidine 404.

It belongs to the peptidase M18 family. The cofactor is Zn(2+).

This Mycobacterium tuberculosis (strain ATCC 25177 / H37Ra) protein is Probable M18 family aminopeptidase 2.